Reading from the N-terminus, the 1423-residue chain is Protein Shroom2 (1423 aa).

Positions 1–101 are disordered; the sequence is MRPSTVTSRI…PDHTLPKADA (101 aa). Positions 8–27 are enriched in low complexity; sequence SRIWWSESSSSSSHDLSGSW. Polar residues-rich tracts occupy residues 28–69 and 83–93; these read EHTS…NSSI and GSFSTCSSTPD. Serine 103 carries the phosphoserine modification. Residues 116–171 form a disordered region; it reads ASRPGSSRQSQSTGDPQGLQDRPSSFLPRVPGNSSKSPRPEDNIEPKIATSGRSNF. The span at 119 to 130 shows a compositional bias: polar residues; that stretch reads PGSSRQSQSTGD. Phosphoserine is present on residues serine 185, serine 197, and serine 291. Disordered stretches follow at residues 300-357, 586-630, 758-855, 872-930, and 1045-1085; these read SYHG…VNQK, TSFQ…SAPR, EILS…SGGQ, PSSS…KLTD, and VETP…KEKT. The region spanning 575–677 is the ASD1 domain; that stretch reads LKEAQTRVLK…SEPEKINEVG (103 aa). Residues 761 to 771 show a composition bias toward basic and acidic residues; sequence SEDRKVEKASE. Phosphoserine occurs at positions 806, 830, 831, and 833. A Phosphothreonine modification is found at threonine 834. The span at 872-885 shows a compositional bias: low complexity; it reads PSSSVLSSAQPQDS. Residues 891 to 923 are compositionally biased toward polar residues; sequence DPTSPQPEAQLSSKCQHLQTSTMETSRSPSPQF. Phosphoserine occurs at positions 918 and 920. A compositionally biased stretch (pro residues) spans 1054 to 1065; the sequence is PEPQPPSTPAPP. 2 positions are modified to phosphoserine: serine 1072 and serine 1329. The ASD2 domain occupies 1092 to 1418; that stretch reads EELAREIVGK…QLKCLFDSLQ (327 aa).

Belongs to the shroom family. As to quaternary structure, interacts with F-actin.

Its subcellular location is the apical cell membrane. It localises to the cell junction. It is found in the tight junction. The protein resides in the cytoplasm. The protein localises to the cytoskeleton. In terms of biological role, may be involved in endothelial cell morphology changes during cell spreading. In the retinal pigment epithelium, may regulate the biogenesis of melanosomes and promote their association with the apical cell surface by inducing gamma-tubulin redistribution. The sequence is that of Protein Shroom2 (Shroom2) from Rattus norvegicus (Rat).